The primary structure comprises 71 residues: Cell division protein ZapB (71 aa).

The stretch at 5-67 forms a coiled coil; sequence LEVLEQLESK…RALLGKMEQM (63 aa).

Belongs to the ZapB family. In terms of assembly, homodimer. The ends of the coiled-coil dimer bind to each other, forming polymers. Interacts with FtsZ.

The protein resides in the cytoplasm. Non-essential, abundant cell division factor that is required for proper Z-ring formation. It is recruited early to the divisome by direct interaction with FtsZ, stimulating Z-ring assembly and thereby promoting cell division earlier in the cell cycle. Its recruitment to the Z-ring requires functional FtsA or ZipA. In Aeromonas salmonicida (strain A449), this protein is Cell division protein ZapB.